Here is a 530-residue protein sequence, read N- to C-terminus: UDP-glucuronosyltransferase 1A10 (530 aa).

The first 25 residues, 1–25 (MARAGWTSPVPLCVCLLLTCGFAEA), serve as a signal peptide directing secretion. Asn71, Asn292, and Asn344 each carry an N-linked (GlcNAc...) asparagine glycan. Residues 488-504 (VIGFLLAVVLTVAFITF) form a helical membrane-spanning segment.

Belongs to the UDP-glycosyltransferase family. As to quaternary structure, homodimer. Homooligomer. Interacts with UGT1A1, UGT1A3, UGT1A4, UGT1A6, UGT1A7, UGT1A8 and UGT1A9 to form heterodimers. Isoform 1 interacts with isoform 2/i2 suggesting that oligomerization is involved in negative regulation of transferase activity by isoform 2. Isoform 1 also interacts with respective i2 isoforms of UGT1A1, UGT1A3, UGT1A4, UGT1A6, UGT1A7, UGT1A8 and UGT1A9. Liver and colon. Isoform 1 and isoform 2 are expressed in colon, esophagus and small intestine; isoform 2 but not isoform 1 is expressed in liver or kidney.

Its subcellular location is the endoplasmic reticulum membrane. The catalysed reaction is glucuronate acceptor + UDP-alpha-D-glucuronate = acceptor beta-D-glucuronoside + UDP + H(+). It catalyses the reaction 17beta-estradiol + UDP-alpha-D-glucuronate = 17beta-estradiol 3-O-(beta-D-glucuronate) + UDP + H(+). It carries out the reaction 17beta-estradiol + UDP-alpha-D-glucuronate = 17beta-estradiol 17-O-(beta-D-glucuronate) + UDP + H(+). The enzyme catalyses 17alpha-estradiol + UDP-alpha-D-glucuronate = 17alpha-estradiol 3-O-(beta-D-glucuronate) + UDP + H(+). The catalysed reaction is 16alpha,17beta-estriol + UDP-alpha-D-glucuronate = 16alpha,17beta-estriol 3-O-(beta-D-glucuronate) + UDP + H(+). It catalyses the reaction 16beta,17beta-estriol + UDP-alpha-D-glucuronate = 16beta,17beta-estriol 3-O-(beta-D-glucuronate) + UDP + H(+). It carries out the reaction 16alpha,17alpha-estriol + UDP-alpha-D-glucuronate = 16alpha,17alpha-estriol 3-O-(beta-D-glucuronate) + UDP + H(+). The enzyme catalyses 16alpha-hydroxyestrone + UDP-alpha-D-glucuronate = 16alpha-hydroxyestrone 3-O-(beta-D-glucuronate) + UDP + H(+). The catalysed reaction is estrone + UDP-alpha-D-glucuronate = estrone 3-O-(beta-D-glucuronate) + UDP + H(+). It catalyses the reaction prunetin + UDP-alpha-D-glucuronate = prunetin-4'-O-beta-D-glucuronide + UDP. It carries out the reaction (5Z,8Z,11Z,14Z)-eicosatetraenoate + UDP-alpha-D-glucuronate = O-[(5Z),(8Z),(11Z),(14Z)-eicosatetraenoyl]-beta-D-glucuronate + UDP. The enzyme catalyses 15-hydroxy-(5Z,8Z,11Z,13E)-eicosatetraenoate + UDP-alpha-D-glucuronate = 15-O-(beta-D-glucuronosyl)-(5Z,8Z,11Z,14Z)-eicosatetraenoate + UDP + H(+). The catalysed reaction is prostaglandin B1 + UDP-alpha-D-glucuronate = 15-O-(beta-D-glucuronosyl)-prostaglandin B1 + UDP + H(+). It catalyses the reaction (E)-ferulate + UDP-alpha-D-glucuronate = (E)-4-O-(beta-D-glucuronosyl)-ferulate + UDP + H(+). It carries out the reaction (E)-ferulate + UDP-alpha-D-glucuronate = (E)-ferulic acid beta-D-glucuronate ester + UDP. The enzyme catalyses losartan + UDP-alpha-D-glucuronate = losartan-2-N-beta-D-glucuronide + UDP. The catalysed reaction is candesartan + UDP-alpha-D-glucuronate = candesartan O-beta-D-glucuronoside + UDP. It catalyses the reaction candesartan + UDP-alpha-D-glucuronate = candesartan-2-N-beta-D-glucuronide + UDP. It carries out the reaction zolasartan + UDP-alpha-D-glucuronate = zolarsartan-1-N-beta-D-glucuronide + UDP. In terms of biological role, UDP-glucuronosyltransferase (UGT) that catalyzes phase II biotransformation reactions in which lipophilic substrates are conjugated with glucuronic acid to increase the metabolite's water solubility, thereby facilitating excretion into either the urine or bile. Essential for the elimination and detoxification of drugs, xenobiotics and endogenous compounds. Catalyzes the glucuronidation of endogenous estrogen hormones such as estradiol, estrone and estriol. Involved in the glucuronidation of arachidonic acid (AA) and AA-derived eicosanoids including 15-HETE and PGB1. Involved in the glucuronidation of the phytochemical ferulic acid at the phenolic or the carboxylic acid group. Also catalyzes the glucuronidation of the isoflavones genistein, daidzein, glycitein, formononetin, biochanin A and prunetin, which are phytoestrogens with anticancer and cardiovascular properties. Involved in the glucuronidation of the AGTR1 angiotensin receptor antagonist losartan, caderastan and zolarsatan, drugs which can inhibit the effect of angiotensin II. Lacks UGT glucuronidation activity but acts as a negative regulator of isoform 1. In Homo sapiens (Human), this protein is UDP-glucuronosyltransferase 1A10.